Here is a 316-residue protein sequence, read N- to C-terminus: D-alanine--D-alanine ligase (316 aa).

In terms of domain architecture, ATP-grasp spans 112–310 (KTALKAHGLP…FGKLCRWLVE (199 aa)). Residue 139–189 (MATPYVVKPNNEGSSVGVYLVNEAANGPPHLSDDMPDEVMVETYAPGRELT) coordinates ATP. Aspartate 261, glutamate 277, and asparagine 279 together coordinate Mg(2+).

Belongs to the D-alanine--D-alanine ligase family. It depends on Mg(2+) as a cofactor. Mn(2+) is required as a cofactor.

It is found in the cytoplasm. It catalyses the reaction 2 D-alanine + ATP = D-alanyl-D-alanine + ADP + phosphate + H(+). Its pathway is cell wall biogenesis; peptidoglycan biosynthesis. Functionally, cell wall formation. The polypeptide is D-alanine--D-alanine ligase (Jannaschia sp. (strain CCS1)).